A 547-amino-acid chain; its full sequence is Regulator of G-protein signaling 14 (547 aa).

The disordered stretch occupies residues valine 19–glutamine 59. Serine 20, serine 42, serine 45, serine 143, serine 199, serine 203, and serine 218 each carry phosphoserine. Over residues glutamate 23–glutamate 58 the composition is skewed to polar residues. Positions serine 67–leucine 184 constitute an RGS domain. Residues arginine 191–proline 220 form a disordered region. At threonine 249 the chain carries Phosphothreonine. Serine 289 bears the Phosphoserine mark. Residues arginine 300 to methionine 427 are necessary for interaction with RABGEF1. 2 RBD domains span residues lysine 303 to arginine 374 and threonine 376 to proline 446. The interval proline 447 to glutamine 496 is disordered. The segment covering leucine 476–serine 491 has biased composition (low complexity). The region spanning isoleucine 500–leucine 522 is the GoLoco domain.

In terms of assembly, interacts with GNAI1 and GNAI2. Interacts with GNAI3. Interacts with GNAO1. Interacts (via RGS and GoLoco domains) with GNAI1; the interaction occurs in the centrosomes. Interaction with GNAI1 or GNAI3 (via active GTP- or inactive GDP-bound forms) prevents association of RGS14 with centrosomes or nuclear localization. Interacts with RABGEF1; the interactions is GTP-dependent. Interacts with RAP2A; the interactions is GTP-dependent and does not alter its function on G(i) alpha subunits either as GAP or as GDI. Associates with microtubules. Found in a complex with at least BRAF, HRAS, MAP2K1, MAPK3 and RGS14. Interacts with RIC8A (via C-terminus). Interacts (via RBD 1 domain) with HRAS (active GTP-bound form preferentially). Interacts (via RBD domains) with BRAF (via N-terminus); the interaction mediates the formation of a ternary complex with RAF1. Interacts (via RBD domains) with RAF1 (via N-terminus); the interaction mediates the formation of a ternary complex with BRAF. Interacts with KRAS (active GTP-bound form preferentially), MRAS (active GTP-bound form preferentially), NRAS (active GTP-bound form preferentially) and RRAS (active GTP-bound form preferentially). In terms of processing, phosphorylated by PKC. Phosphorylation is increased in presence of forskolin and may enhance the GDI activity on G(i) alpha subunit GNAI1. In terms of tissue distribution, expressed in pyramidal neurons of the CA1, CA2 and fasciola cinerea (FC) subregions of the hippocampus and in the olfactory cortex (at protein level). Expressed in brain, spleen, heart, liver, lung, kidney, skin and thymus (at protein level). Expressed in granular layer of the cerebellum, forbrain, striatum, layer V of the cortex, olfactory cortex, tubercules, subthalamic and hippocampus, particularly in the CA2 region, to a lesser extent in the CA1 region and the external layer of the dentate gyrus. Expressed in neurons.

It is found in the nucleus. The protein resides in the PML body. The protein localises to the cytoplasm. It localises to the membrane. Its subcellular location is the cell membrane. It is found in the cytoskeleton. The protein resides in the spindle. The protein localises to the spindle pole. It localises to the microtubule organizing center. Its subcellular location is the centrosome. It is found in the cell projection. The protein resides in the dendrite. The protein localises to the dendritic spine. It localises to the postsynaptic density. In terms of biological role, regulates G protein-coupled receptor signaling cascades. Inhibits signal transduction by increasing the GTPase activity of G protein alpha subunits, thereby driving them into their inactive GDP-bound form. Besides, modulates signal transduction via G protein alpha subunits by functioning as a GDP-dissociation inhibitor (GDI). Has GDI activity on G(i) alpha subunits GNAI1 and GNAI3, but not on GNAI2 and G(o)-alpha subunit GNAO1. Has GAP activity on GNAI0, GNAI2 and GNAI3. May act as a scaffold integrating G protein and Ras/Raf MAPkinase signaling pathways. Inhibits platelet-derived growth factor (PDGF)-stimulated ERK1/ERK2 phosphorylation; a process depending on its interaction with HRAS and that is reversed by G(i) alpha subunit GNAI1. Acts as a positive modulator of microtubule polymerisation and spindle organization through a G(i)-alpha-dependent mechanism. Plays a role in cell division; required for completion of the first mitotic division of the embryo. Involved in visual memory processing capacity; when overexpressed in the V2 secondary visual cortex area. Involved in hippocampal-based learning and memory; acts as a suppressor of synaptic plasticity in CA2 neurons. Required for the nerve growth factor (NGF)-mediated neurite outgrowth. Involved in stress resistance. The protein is Regulator of G-protein signaling 14 (Rgs14) of Mus musculus (Mouse).